A 418-amino-acid polypeptide reads, in one-letter code: UDP-N-acetylglucosamine 1-carboxyvinyltransferase (418 aa).

Position 22–23 (22–23) interacts with phosphoenolpyruvate; it reads KN. Arg92 serves as a coordination point for UDP-N-acetyl-alpha-D-glucosamine. Cys116 serves as the catalytic Proton donor. Cys116 bears the 2-(S-cysteinyl)pyruvic acid O-phosphothioketal mark. Residues Asp305 and Ile327 each contribute to the UDP-N-acetyl-alpha-D-glucosamine site.

It belongs to the EPSP synthase family. MurA subfamily.

It localises to the cytoplasm. It catalyses the reaction phosphoenolpyruvate + UDP-N-acetyl-alpha-D-glucosamine = UDP-N-acetyl-3-O-(1-carboxyvinyl)-alpha-D-glucosamine + phosphate. It participates in cell wall biogenesis; peptidoglycan biosynthesis. Its function is as follows. Cell wall formation. Adds enolpyruvyl to UDP-N-acetylglucosamine. The chain is UDP-N-acetylglucosamine 1-carboxyvinyltransferase from Gluconobacter oxydans (strain 621H) (Gluconobacter suboxydans).